The primary structure comprises 429 residues: UDP-N-acetylglucosamine 1-carboxyvinyltransferase (429 aa).

Residue 22–23 (KN) coordinates phosphoenolpyruvate. Residue R102 coordinates UDP-N-acetyl-alpha-D-glucosamine. C126 functions as the Proton donor in the catalytic mechanism. C126 is subject to 2-(S-cysteinyl)pyruvic acid O-phosphothioketal. Residues 131 to 135 (RPVDL), D316, and I338 each bind UDP-N-acetyl-alpha-D-glucosamine.

Belongs to the EPSP synthase family. MurA subfamily.

It is found in the cytoplasm. It carries out the reaction phosphoenolpyruvate + UDP-N-acetyl-alpha-D-glucosamine = UDP-N-acetyl-3-O-(1-carboxyvinyl)-alpha-D-glucosamine + phosphate. The protein operates within cell wall biogenesis; peptidoglycan biosynthesis. Its function is as follows. Cell wall formation. Adds enolpyruvyl to UDP-N-acetylglucosamine. This is UDP-N-acetylglucosamine 1-carboxyvinyltransferase from Afipia carboxidovorans (strain ATCC 49405 / DSM 1227 / KCTC 32145 / OM5) (Oligotropha carboxidovorans).